A 703-amino-acid polypeptide reads, in one-letter code: UvrABC system protein B (703 aa).

The Helicase ATP-binding domain maps to 33–190 (TRIENGENDV…RRFVAMQYKR (158 aa)). 46 to 53 (GATGTGKT) lines the ATP pocket. Residues 99–122 (YYDYYQPEAYIPQTDTYIEKDSNI) carry the Beta-hairpin motif. Residues 436–589 (QIDDLLAEIK…QIAYNQEHGI (154 aa)) enclose the Helicase C-terminal domain. One can recognise a UVR domain in the interval 659–694 (ADLIRQLSEQMHTAAEQLQFELAARLRDEIRDLKKE).

Belongs to the UvrB family. In terms of assembly, forms a heterotetramer with UvrA during the search for lesions. Interacts with UvrC in an incision complex.

It localises to the cytoplasm. Functionally, the UvrABC repair system catalyzes the recognition and processing of DNA lesions. A damage recognition complex composed of 2 UvrA and 2 UvrB subunits scans DNA for abnormalities. Upon binding of the UvrA(2)B(2) complex to a putative damaged site, the DNA wraps around one UvrB monomer. DNA wrap is dependent on ATP binding by UvrB and probably causes local melting of the DNA helix, facilitating insertion of UvrB beta-hairpin between the DNA strands. Then UvrB probes one DNA strand for the presence of a lesion. If a lesion is found the UvrA subunits dissociate and the UvrB-DNA preincision complex is formed. This complex is subsequently bound by UvrC and the second UvrB is released. If no lesion is found, the DNA wraps around the other UvrB subunit that will check the other stand for damage. The sequence is that of UvrABC system protein B from Bifidobacterium longum subsp. infantis (strain ATCC 15697 / DSM 20088 / JCM 1222 / NCTC 11817 / S12).